A 789-amino-acid polypeptide reads, in one-letter code: Homocitrate dehydratase, mitochondrial (789 aa).

A mitochondrion-targeting transit peptide spans 1-14 (MLSSANRFYIKRHL). Residues Gln-96 and 189–191 (DSH) each bind substrate. [4Fe-4S] cluster-binding residues include Cys-385, Cys-448, and Cys-451. Residues Arg-476, Arg-481, Lys-610, and 672 to 673 (AR) each bind substrate.

Belongs to the aconitase/IPM isomerase family. [4Fe-4S] cluster serves as cofactor.

Its subcellular location is the mitochondrion. The catalysed reaction is (2R)-homocitrate = cis-homoaconitate + H2O. It participates in amino-acid biosynthesis; L-lysine biosynthesis via AAA pathway; L-alpha-aminoadipate from 2-oxoglutarate: step 2/5. Catalyzes the reversible dehydration of (R)-homocitrate to cis-homoaconitate, a step in the alpha-aminoadipate pathway for lysine biosynthesis. The chain is Homocitrate dehydratase, mitochondrial (ACO2) from Saccharomyces cerevisiae (strain ATCC 204508 / S288c) (Baker's yeast).